The primary structure comprises 86 residues: Putative protein adenylyltransferase MJ1215 (86 aa).

The GSX(10)DXD motif motif lies at 35–49 (GSYARGEQKETSDID). Positions 47, 49, and 79 each coordinate Mg(2+).

This sequence belongs to the MntA antitoxin family. In terms of assembly, probably forms a complex with cognate toxin MJ1216. Mg(2+) serves as cofactor.

The enzyme catalyses L-tyrosyl-[protein] + ATP = O-(5'-adenylyl)-L-tyrosyl-[protein] + diphosphate. The catalysed reaction is O-(5'-adenylyl)-L-tyrosyl-[protein] + ATP = O-[5'-(adenylyl-(5'-&gt;3')-adenylyl)]-L-tyrosyl-[protein] + diphosphate. Its function is as follows. Probable antitoxin component of a putative type VII toxin-antitoxin (TA) system. Neutralizes cognate toxic MJ1216 by di-AMPylation. This chain is Putative protein adenylyltransferase MJ1215, found in Methanocaldococcus jannaschii (strain ATCC 43067 / DSM 2661 / JAL-1 / JCM 10045 / NBRC 100440) (Methanococcus jannaschii).